Reading from the N-terminus, the 260-residue chain is UPF0246 protein BamMC406_2140 (260 aa).

This sequence belongs to the UPF0246 family.

In Burkholderia ambifaria (strain MC40-6), this protein is UPF0246 protein BamMC406_2140.